The chain runs to 532 residues: CTP synthase (532 aa).

Residues 1 to 268 (MTTKYIFVTG…DEIVCDHLNL (268 aa)) form an amidoligase domain region. Ser-14 lines the CTP pocket. A UTP-binding site is contributed by Ser-14. 15–20 (SLGKGI) is an ATP binding site. Tyr-55 is an L-glutamine binding site. Asp-72 serves as a coordination point for ATP. The Mg(2+) site is built by Asp-72 and Glu-142. CTP is bound by residues 149 to 151 (DIE), 189 to 194 (KSKPTQ), and Lys-225. UTP contacts are provided by residues 189-194 (KSKPTQ) and Lys-225. 241–243 (RDA) is a binding site for ATP. The region spanning 293-532 (KIALVGKYVA…REFIQASLRK (240 aa)) is the Glutamine amidotransferase type-1 domain. Residue Gly-355 participates in L-glutamine binding. The Nucleophile; for glutamine hydrolysis role is filled by Cys-382. L-glutamine is bound by residues 383–386 (LGMQ), Glu-406, and Arg-463. Active-site residues include His-508 and Glu-510.

The protein belongs to the CTP synthase family. In terms of assembly, homotetramer.

It catalyses the reaction UTP + L-glutamine + ATP + H2O = CTP + L-glutamate + ADP + phosphate + 2 H(+). The enzyme catalyses L-glutamine + H2O = L-glutamate + NH4(+). It carries out the reaction UTP + NH4(+) + ATP = CTP + ADP + phosphate + 2 H(+). Its pathway is pyrimidine metabolism; CTP biosynthesis via de novo pathway; CTP from UDP: step 2/2. Allosterically activated by GTP, when glutamine is the substrate; GTP has no effect on the reaction when ammonia is the substrate. The allosteric effector GTP functions by stabilizing the protein conformation that binds the tetrahedral intermediate(s) formed during glutamine hydrolysis. Inhibited by the product CTP, via allosteric rather than competitive inhibition. Functionally, catalyzes the ATP-dependent amination of UTP to CTP with either L-glutamine or ammonia as the source of nitrogen. Regulates intracellular CTP levels through interactions with the four ribonucleotide triphosphates. This Halalkalibacterium halodurans (strain ATCC BAA-125 / DSM 18197 / FERM 7344 / JCM 9153 / C-125) (Bacillus halodurans) protein is CTP synthase.